The following is a 207-amino-acid chain: Histone H1-like protein HC2 (207 aa).

Basic residues-rich tracts occupy residues 1–50 and 59–72; these read MLGV…KTVA and PAAK…APVR. A disordered region spans residues 1–72; sequence MLGVQKKRST…KTAAKKAPVR (72 aa). 3 tandem repeats follow at residues 35 to 58, 71 to 94, and 113 to 136. The tract at residues 35 to 136 is 3 X 24 AA repeats of V-R-K-V-A-A-K-K-T-V-A-R-K-T-V-A-K-K-A-V-A-A-R-K; it reads VRKVAAKKTV…VAKKAVAARK (102 aa).

The protein belongs to the histone H1/H5 family. HCT subfamily.

Might have a role in establishing the nucleoid structure of elementary bodies. This is Histone H1-like protein HC2 (hctB) from Chlamydia muridarum (strain MoPn / Nigg).